A 69-amino-acid chain; its full sequence is Large ribosomal subunit protein eL38z/eL38y (69 aa).

Belongs to the eukaryotic ribosomal protein eL38 family.

The polypeptide is Large ribosomal subunit protein eL38z/eL38y (RPL38A) (Arabidopsis thaliana (Mouse-ear cress)).